A 193-amino-acid polypeptide reads, in one-letter code: Protein Syd (193 aa).

This sequence belongs to the Syd family.

The protein resides in the cell inner membrane. Interacts with the SecY protein in vivo. May bind preferentially to an uncomplexed state of SecY, thus functioning either as a chelating agent for excess SecY in the cell or as a regulatory factor that negatively controls the translocase function. This is Protein Syd from Tolumonas auensis (strain DSM 9187 / NBRC 110442 / TA 4).